We begin with the raw amino-acid sequence, 93 residues long: MTIIASISKIGNIKSSSSSSIGSGKSSAVSFGNSRIACGECGGSATGLLGNIANSGTGMVSQIPVTVMLDVNANANLNPSMSAVPAGNSCGCN.

Belongs to the hssA/B family.

This is HssA/B-like protein 26 (hssl26) from Dictyostelium discoideum (Social amoeba).